A 176-amino-acid polypeptide reads, in one-letter code: Inorganic pyrophosphatase (176 aa).

Substrate is bound by residues K31, R45, and Y57. D67, D72, and D104 together coordinate Mg(2+). Y142 serves as a coordination point for substrate.

The protein belongs to the PPase family. In terms of assembly, homohexamer. Requires Mg(2+) as cofactor.

It is found in the cytoplasm. It carries out the reaction diphosphate + H2O = 2 phosphate + H(+). Functionally, catalyzes the hydrolysis of inorganic pyrophosphate (PPi) forming two phosphate ions. The chain is Inorganic pyrophosphatase from Haemophilus influenzae (strain ATCC 51907 / DSM 11121 / KW20 / Rd).